Here is a 412-residue protein sequence, read N- to C-terminus: Phytoene synthase, chloroplastic (412 aa).

This sequence belongs to the phytoene/squalene synthase family. As to quaternary structure, monomer. As to expression, expressed in roots, leaves, flower buds, sepals, petals, lips and lip crests.

The protein localises to the plastid. The protein resides in the chloroplast. It carries out the reaction 2 (2E,6E,10E)-geranylgeranyl diphosphate = 15-cis-phytoene + 2 diphosphate. The protein operates within carotenoid biosynthesis; phytoene biosynthesis; all-trans-phytoene from geranylgeranyl diphosphate: step 1/1. Functionally, catalyzes the reaction from prephytoene diphosphate to phytoene. This Oncidium hybrid cultivar (Orchid) protein is Phytoene synthase, chloroplastic (PSY).